The following is a 284-amino-acid chain: NAD kinase (284 aa).

Aspartate 70 (proton acceptor) is an active-site residue. NAD(+) is bound by residues 70–71 (DG), 139–140 (NE), lysine 167, aspartate 169, leucine 177, 180–185 (TAYNLS), and glutamine 236.

Belongs to the NAD kinase family. It depends on a divalent metal cation as a cofactor.

Its subcellular location is the cytoplasm. It catalyses the reaction NAD(+) + ATP = ADP + NADP(+) + H(+). In terms of biological role, involved in the regulation of the intracellular balance of NAD and NADP, and is a key enzyme in the biosynthesis of NADP. Catalyzes specifically the phosphorylation on 2'-hydroxyl of the adenosine moiety of NAD to yield NADP. This is NAD kinase from Helicobacter pylori (strain Shi470).